A 94-amino-acid chain; its full sequence is uncharacterized protein (94 aa).

The next 2 helical transmembrane spans lie at 9–29 and 34–54; these read TLAK…FFST and LIEL…VFIV.

It localises to the cell membrane. This is an uncharacterized protein from Bacillus subtilis (strain 168).